The primary structure comprises 336 residues: Phospho-N-acetylmuramoyl-pentapeptide-transferase (336 aa).

10 helical membrane-spanning segments follow: residues 3-23 (LTLI…PYFI), 53-73 (GGTV…LFSI), 78-98 (SLAL…IGFL), 118-138 (LALQ…PSGI), 143-163 (VFGY…FWVV), 174-194 (GIDG…GVIA), 200-220 (FDVL…FCFN), 226-246 (VFMG…ISIA), 251-271 (WTLL…MLQV), and 316-336 (AFLW…LYVF).

The protein belongs to the glycosyltransferase 4 family. MraY subfamily. Mg(2+) is required as a cofactor.

The protein resides in the cell membrane. The catalysed reaction is UDP-N-acetyl-alpha-D-muramoyl-L-alanyl-gamma-D-glutamyl-L-lysyl-D-alanyl-D-alanine + di-trans,octa-cis-undecaprenyl phosphate = Mur2Ac(oyl-L-Ala-gamma-D-Glu-L-Lys-D-Ala-D-Ala)-di-trans,octa-cis-undecaprenyl diphosphate + UMP. It functions in the pathway cell wall biogenesis; peptidoglycan biosynthesis. Functionally, catalyzes the initial step of the lipid cycle reactions in the biosynthesis of the cell wall peptidoglycan: transfers peptidoglycan precursor phospho-MurNAc-pentapeptide from UDP-MurNAc-pentapeptide onto the lipid carrier undecaprenyl phosphate, yielding undecaprenyl-pyrophosphoryl-MurNAc-pentapeptide, known as lipid I. The protein is Phospho-N-acetylmuramoyl-pentapeptide-transferase of Streptococcus pyogenes serotype M5 (strain Manfredo).